The chain runs to 284 residues: RNA polymerase sigma factor RpoH (284 aa).

A sigma-70 factor domain-2 region spans residues 53–122 (LILSHLRFVV…IHEYVLRNWR (70 aa)). The short motif at 77-80 (DLIQ) is the Interaction with polymerase core subunit RpoC element. Positions 228–280 (AMQGLDERSQDIIRARWLDEDNKSTLQELADRYGVSAERVRQLEKNAMKKLRA) are sigma-70 factor domain-4. Residues 253-272 (LQELADRYGVSAERVRQLEK) constitute a DNA-binding region (H-T-H motif).

Belongs to the sigma-70 factor family. RpoH subfamily. Interacts with the RNA polymerase core enzyme.

It is found in the cytoplasm. Its function is as follows. Sigma factors are initiation factors that promote the attachment of RNA polymerase to specific initiation sites and are then released. This sigma factor is involved in regulation of expression of heat shock genes. This Escherichia coli O6:H1 (strain CFT073 / ATCC 700928 / UPEC) protein is RNA polymerase sigma factor RpoH.